A 1172-amino-acid chain; its full sequence is MMPRNNLEASTCKMAEPFNFEKKESKPPPQDPLRSPVAQHNHPTFRLKSPENGNTKNNFLLCEQNKQYLASQEDSSVVSSNPAVVNGEVGGSKGDRKPPPTGNPVSPLSLGNSSPPNQVKTKPSSNVTPEKSKKSHKLFENALSVNNPALFNSLGPPLRSTTCHRCGLFGSLRCSQCKQTYYCSTACQRRDWSSHSTICRPVQQSLNKLEDNKSPFETKAIEVKSEVDCPPGVTKEITAGAERVMFSDLRSLQLKKTMEIKGTVTEFKHPSNFYIQLYSSEVLENMNQLSTSLKETYANVVPEDGYLPVKGEVCVAKYTVDQTWNRAIVQAVDVLQRKAHVLYIDYGNEEMIPIDSVHPLSRGLDLFPPSAIKCCVSGVIPTAGEWSEGCVAAVKALLFEQFCSVKVMDILEEEVLTCAVDLVLQSSGKQLDHVLVEMGYGVKPGEQSSTEQSVDHSALEDVGRVTVESKIVTDRNALIPKVLTLNVGDEFCGVVAHIQTPEDFFCQQLQSGHKLAELQESLSEYCGHVIPRSDFYPTIGDVCCAQFSEDDQWYRASVLAYASEESVLVGYVDYGNFEILSLKRLCPIIPKLLDLPMQALNCVLAGVKPSLGIWTPEAVCVMKEMVQNRMVTVRVVGMLGTRALVELIDKSVAPHVSASKALIDSGFAIKEKDVADKGSSMHTASVPLAIEGPAEALEWTWVEFTVDETVDVVVCMMYSPGEFYCHFLKDDALEKLDDLNQSLADYCAQKPPNGFKAEIGRPCCAFFSGDGNWYRALVKEILPSGNVKVHFVDYGNVEEVTTDQLQAILPQFLLLPFQGMQCWLVDIQPPNKHWTKEATARFQACVVGLKLQARVVEITANGVGVELTDLSTPYPKIISDVLIREQLVLRCGSPQDSLMSRPANQHKQIDSHRVQASPSAEQWKTMELPVNKTIAANVLEIISPALFYAIPSEMSENQEKLCVLAAELLEHCNAQKGQPAYRPRTGDACCAKYTNDDFWYRAIVLETSESDVKVLYADYGNIETLPLSRVQPIPASHLELPFQIIRCSLEGPMELNGSCSQLVMELLRNAMLNQSVVLSVKAISKNVHAVSVEKCSENGMINIAENLVMCGLAENLTSKRKSASTKEIPHSRDCCCTELQKQIEKHEQILLFLLNNPTNQSKFTEMKKLLRS.

Disordered stretches follow at residues methionine 1 to phenylalanine 59 and glutamine 72 to histidine 136. Composition is skewed to low complexity over residues serine 75 to asparagine 86 and asparagine 103 to asparagine 117. Polar residues predominate over residues glutamine 118–proline 129. Zn(2+) contacts are provided by cysteine 163, cysteine 166, cysteine 174, cysteine 177, cysteine 183, cysteine 187, histidine 195, and cysteine 199. Residues cysteine 163–cysteine 199 form an MYND-type zinc finger. 4 consecutive Tudor domains span residues leucine 307–phenylalanine 367, tyrosine 536–leucine 595, lysine 756–leucine 815, and arginine 982–leucine 1040.

It belongs to the TDRD1 family. As to quaternary structure, found in a mRNP complex, at least composed of TDRD1, TDRD6, TDRD7 and DDX4. Interacts with MAEL. Interacts with PIWIL1, PIWIL2 and PIWIL4 (when methylated on arginine residues). Interacts with TDRD12. As to expression, testis and ovary specific. Present in germ-line cells and is most abundant in fetal prospermatogonia and postnatal primary spermatocytes (at protein level).

Its subcellular location is the cytoplasm. Functionally, plays a central role during spermatogenesis by participating in the repression transposable elements and preventing their mobilization, which is essential for the germline integrity. Acts via the piRNA metabolic process, which mediates the repression of transposable elements during meiosis by forming complexes composed of piRNAs and Piwi proteins and governs the methylation and subsequent repression of transposons. Required for the localization of Piwi proteins to the meiotic nuage. Involved in the piRNA metabolic process by ensuring the entry of correct transcripts into the normal piRNA pool and limiting the entry of cellular transcripts into the piRNA pathway. May act by allowing the recruitment of piRNA biogenesis or loading factors that ensure the correct entry of transcripts and piRNAs into Piwi proteins. The protein is Tudor domain-containing protein 1 (Tdrd1) of Mus musculus (Mouse).